The sequence spans 162 residues: Crossover junction endodeoxyribonuclease RuvC (162 aa).

Residues Asp-7, Glu-67, and Asp-140 contribute to the active site. Mg(2+) is bound by residues Asp-7, Glu-67, and Asp-140.

Belongs to the RuvC family. Homodimer which binds Holliday junction (HJ) DNA. The HJ becomes 2-fold symmetrical on binding to RuvC with unstacked arms; it has a different conformation from HJ DNA in complex with RuvA. In the full resolvosome a probable DNA-RuvA(4)-RuvB(12)-RuvC(2) complex forms which resolves the HJ. Mg(2+) is required as a cofactor.

The protein localises to the cytoplasm. The enzyme catalyses Endonucleolytic cleavage at a junction such as a reciprocal single-stranded crossover between two homologous DNA duplexes (Holliday junction).. Its function is as follows. The RuvA-RuvB-RuvC complex processes Holliday junction (HJ) DNA during genetic recombination and DNA repair. Endonuclease that resolves HJ intermediates. Cleaves cruciform DNA by making single-stranded nicks across the HJ at symmetrical positions within the homologous arms, yielding a 5'-phosphate and a 3'-hydroxyl group; requires a central core of homology in the junction. The consensus cleavage sequence is 5'-(A/T)TT(C/G)-3'. Cleavage occurs on the 3'-side of the TT dinucleotide at the point of strand exchange. HJ branch migration catalyzed by RuvA-RuvB allows RuvC to scan DNA until it finds its consensus sequence, where it cleaves and resolves the cruciform DNA. The protein is Crossover junction endodeoxyribonuclease RuvC of Wolinella succinogenes (strain ATCC 29543 / DSM 1740 / CCUG 13145 / JCM 31913 / LMG 7466 / NCTC 11488 / FDC 602W) (Vibrio succinogenes).